A 186-amino-acid chain; its full sequence is Ribosome-recycling factor (186 aa).

It belongs to the RRF family.

It localises to the cytoplasm. In terms of biological role, responsible for the release of ribosomes from messenger RNA at the termination of protein biosynthesis. May increase the efficiency of translation by recycling ribosomes from one round of translation to another. In Rickettsia massiliae (strain Mtu5), this protein is Ribosome-recycling factor.